The chain runs to 594 residues: MNELIKHKLELLPDSPGCYLHKDKAGTIIYVGKAKNLRNRVRSYFRGSHDTKTELLVSEIADFEFIVTGSNTEALLLEINLIQENMPKYNIKLKDDKSYPFIKITNEPFPRLLITRQIKKNDGLYFGPYPDAYTATEVKKLLDRIFPFKKCKNPVNKVCFYYHLGQCQAHTICHTDKAYWDSLVADVKQFLNGKDDKIIDDLRSKMLEASNKQEFERAAEYRDLISGIATMRTKQRVMSKDLQDRDIFGYFVDKGWMCVQVFFVRQGKLIQRDVNMFPYYNEAEEDFLTYVGQFYSDQRHLIPKEIFIPETIDETLVAAIVPARIVKPQRGEKKQLVALATKNARVSLQQKFDLLEKDLRKTSGAIEHLGQLLGIEKPVRIEAFDNSNIQGTSPVAAMVVFVDGKPSKKDYRKFKIKTVIGPDDYASMREVIYRRYSRVKHEGLQVPDLIIVDGGQGQVKAARDVIEHQLGLSIPVAGLQKNDKHQTHELLFGNPLAVVELPRNSEEFFLLHRIQDEVHRFAITFHRQVRSKNAFSSKLDHIAGLGPKRKQLLLKRFKSMTALEQASLEEIQQLGIPKTVAEALFDHLTSKSEV.

One can recognise a GIY-YIG domain in the interval 14 to 91 (DSPGCYLHKD…IQENMPKYNI (78 aa)). The 36-residue stretch at 196–231 (DKIIDDLRSKMLEASNKQEFERAAEYRDLISGIATM) folds into the UVR domain.

Belongs to the UvrC family. In terms of assembly, interacts with UvrB in an incision complex.

It is found in the cytoplasm. In terms of biological role, the UvrABC repair system catalyzes the recognition and processing of DNA lesions. UvrC both incises the 5' and 3' sides of the lesion. The N-terminal half is responsible for the 3' incision and the C-terminal half is responsible for the 5' incision. This chain is UvrABC system protein C, found in Streptococcus equi subsp. zooepidemicus (strain MGCS10565).